We begin with the raw amino-acid sequence, 352 residues long: Protein Wnt-3a (352 aa).

Positions 1–18 are cleaved as a signal peptide; the sequence is MAPLGYFLLLCSLKQALG. 11 disulfide bridges follow: cysteine 77–cysteine 88, cysteine 128–cysteine 136, cysteine 138–cysteine 155, cysteine 203–cysteine 217, cysteine 205–cysteine 212, cysteine 281–cysteine 312, cysteine 297–cysteine 307, cysteine 311–cysteine 351, cysteine 327–cysteine 342, cysteine 329–cysteine 339, and cysteine 334–cysteine 335. Asparagine 87 carries N-linked (GlcNAc...) asparagine glycosylation. Serine 209 carries O-palmitoleoyl serine; by PORCN lipidation. Asparagine 298 is a glycosylation site (N-linked (GlcNAc...) asparagine).

This sequence belongs to the Wnt family. Forms a soluble 1:1 complex with AFM; this prevents oligomerization and is required for prolonged biological activity. The complex with AFM may represent the physiological form in body fluids. Homooligomer; disulfide-linked, leading to inactivation. Interacts with PORCN. Interacts with APCDD1 and WLS. Component of the Wnt-Fzd-LRP5-LRP6 signaling complex that contains a WNT protein, a FZD protein and LRP5 or LRP6. Interacts directly in the complex with LRP6. Interacts with glypican GPC3. Interacts with PKD1 (via extracellular domain). Interacts with FZD5. Post-translationally, palmitoleoylation by PORCN is required for efficient binding to frizzled receptors. Palmitoleoylation is required for proper trafficking to cell surface, vacuolar acidification is critical to release palmitoleoylated WNT3A from WLS in secretory vesicles. Depalmitoleoylated by NOTUM, leading to inhibit Wnt signaling pathway, possibly by promoting disulfide bond formation and oligomerization. Proteolytic processing by TIKI1 and TIKI2 promotes oxidation and formation of large disulfide-bond oligomers, leading to inactivation of WNT3A. In terms of processing, disulfide bonds have critical and distinct roles in secretion and activity. Loss of each conserved cysteine in WNT3A results in high molecular weight oxidized Wnt oligomers, which are formed through inter-Wnt disulfide bonding. Moderately expressed in placenta and at low levels in adult lung, spleen, and prostate.

It is found in the secreted. Its subcellular location is the extracellular space. It localises to the extracellular matrix. Functionally, ligand for members of the frizzled family of seven transmembrane receptors. Functions in the canonical Wnt signaling pathway that results in activation of transcription factors of the TCF/LEF family. Required for normal embryonic mesoderm development and formation of caudal somites. Required for normal morphogenesis of the developing neural tube. Mediates self-renewal of the stem cells at the bottom on intestinal crypts (in vitro). In Homo sapiens (Human), this protein is Protein Wnt-3a (WNT3A).